The chain runs to 242 residues: DNA repair protein RecO (242 aa).

This sequence belongs to the RecO family. Monomer.

In terms of biological role, involved in DNA repair and RecF pathway recombination. The sequence is that of DNA repair protein RecO from Salmonella enteritidis PT4 (strain P125109).